Here is a 547-residue protein sequence, read N- to C-terminus: Smu-2 suppressor of mec-8 and unc-52 protein (547 aa).

Disordered regions lie at residues 18-125 (TSAR…AQDQ), 164-202 (IDKSDDDDDDDIDTAFDEKVTSSSSSSKPSEASLLAQEL), 288-459 (AEPK…AGPK), 496-515 (NGEGGRKNKKQSAVSDAKRL), and 524-547 (KIMDKRKAGGDGAGGGGDYKKPKY). A compositionally biased stretch (basic and acidic residues) spans 34–44 (ADPKTGDDKPA). A compositionally biased stretch (basic residues) spans 45–58 (SFKHKHLKPAKFKK). Residues 66–94 (KAKKEKTEADEDEAALKNILKNYRDRAAE) are a coiled coil. The span at 87-106 (NYRDRAAERRKQGDEKEDPS) shows a compositional bias: basic and acidic residues. Positions 163 to 223 (EIDKSDDDDD…SLHRVLFKNE (61 aa)) are required and sufficient for interaction with smu-1. A compositionally biased stretch (acidic residues) spans 166–178 (KSDDDDDDDIDTA). 2 stretches are compositionally biased toward low complexity: residues 185-196 (SSSSSSKPSEAS) and 307-317 (APGAAAAAPGA). Over residues 330 to 423 (VPSRKSRDSR…EREKKRKELE (94 aa)) the composition is skewed to basic and acidic residues. 12 repeat units span residues 336–337 (RD), 339–340 (RD), 348–349 (RD), 350–351 (RS), 352–353 (RD), 354–355 (RS), 356–357 (RD), 358–359 (RD), 360–361 (RD), 362–363 (RD), 364–365 (RD), and 367–368 (RD). Positions 336 to 368 (RDSRDAGRRGSRRDRSRDRSRDRDRDRDRDNRD) are 12 X 2 AA repeats of R-[DS]. A coiled-coil region spans residues 371-427 (FEKSANSRREEEQNRREQQRERERAEQERRREREKEREQEKAKEREKKRKELEESSG).

It belongs to the RED family. In terms of assembly, probable component of the spliceosome. Heterotetramer with smu-1. The smu-1 homodimer interacts (via the N-terminal region including the LisH and CTLH domains) with smu-2, giving rise to a heterotetramer. Ubiquitous.

It is found in the nucleus. Its function is as follows. Auxiliary spliceosomal protein that regulates selection of alternative splice sites in a small set of target pre-mRNA species. Selectively regulates alternative splicing of unc-52 exon 17. Thus, smu-2 mutants selectively suppress the effects of unc-52 nonsense mutations in exon 17 by promoting the accumulation of unc-52 isoforms that lack exon 17. In contrast, smu-2 mutants do not suppress the effects of an unc-52 mutation that affects the 5' splice site of exon 16. Required for normal accumulation of smu-1. The polypeptide is Smu-2 suppressor of mec-8 and unc-52 protein (Caenorhabditis elegans).